The sequence spans 465 residues: Argininosuccinate lyase (465 aa).

It belongs to the lyase 1 family. Argininosuccinate lyase subfamily.

It is found in the cytoplasm. The enzyme catalyses 2-(N(omega)-L-arginino)succinate = fumarate + L-arginine. The protein operates within amino-acid biosynthesis; L-arginine biosynthesis; L-arginine from L-ornithine and carbamoyl phosphate: step 3/3. The polypeptide is Argininosuccinate lyase (Variovorax paradoxus (strain S110)).